A 1023-amino-acid polypeptide reads, in one-letter code: NLR family CARD domain-containing protein 4 (1023 aa).

The CARD domain occupies 1-88 (MNFIKENSQA…PVYQDLTGHS (88 aa)). The nucleotide-binding domain (NBD) stretch occupies residues 95 to 298 (EEDLDVLAQS…HVGALTVEVG (204 aa)). The region spanning 163 to 476 (SPCLIEGESG…VSKGNSYLKK (314 aa)) is the NACHT domain. 169 to 176 (GESGKGKS) contributes to the ATP binding site. The segment at 356–463 (AHTQTMLFQT…RLSSLLKSRE (108 aa)) is winged-helix domain (WHD). Serine 533 carries the phosphoserine modification. 12 LRR repeats span residues 578–598 (FFQG…LFDF), 655–678 (MQKF…DIKY), 734–757 (VTDL…LADS), 761–784 (LKNL…SLAE), 786–811 (LRNL…DYIV), 823–846 (EMKL…LHNL), 847–869 (VKLS…ALQG), 877–901 (LEQL…LLKQ), 910–932 (KLGL…FLEM), 935–962 (LRDL…VFEN), 964–984 (KQLV…ALVR), and 998–1020 (EARL…TFKL).

In terms of assembly, homooligomer; homooligomerizes following activation of Naip proteins by pathogenic proteins such as S.typhimurium (Salmonella) flagellin or PrgJ. Component of the NLRC4 inflammasome, at least composed of NLRC4, caspase-1 (CASP1) and some NAIP family member. Interacts with EIF2AK2/PKR. Post-translationally, phosphorylated at Ser-533 following infection of macrophages with S.typhimurium (Salmonella). Phosphorylation is essential for NLRC4 inflammasome function to promote caspase-1 activation and pyroptosis. PRKCD phosphorylates Ser-533 in vitro.

The protein localises to the cytoplasm. It localises to the cytosol. Its function is as follows. Key component of inflammasomes that indirectly senses specific proteins from pathogenic bacteria and fungi and responds by assembling an inflammasome complex that promotes caspase-1 activation, cytokine production and macrophage pyroptosis. The NLRC4 inflammasome is activated as part of the innate immune response to a range of intracellular bacteria. This Rattus norvegicus (Rat) protein is NLR family CARD domain-containing protein 4 (Nlrc4).